A 495-amino-acid chain; its full sequence is Pentatricopeptide repeat-containing protein PPR5 homolog, chloroplastic (495 aa).

Positions 1 to 24 are disordered; sequence MLAYPTTSSPWPPRHHGAAAAPAA. The N-terminal 29 residues, 1–29, are a transit peptide targeting the chloroplast; it reads MLAYPTTSSPWPPRHHGAAAAPAARRHMA. PPR repeat units follow at residues 120 to 154, 155 to 189, 195 to 229, 230 to 264, 265 to 299, 300 to 334, 335 to 365, 370 to 404, and 405 to 439; these read DNGIYSKLISVMGRKGQIRMAMWLFSQMRNSGCRP, DTSVYNSLIGTHLHSRDKSKALAKALGYFEKMKTI, NIVTYNILLRAFAQAGDTKQLDILFKDLDESPVSP, DIYTYNGVMDAYGKNGMITEMESVLVRMKSNQCRP, DVITFNILIDSYGRKQAFDKMEQVFKSLLRSKEKP, THPTFNSMITNYGKARLREKAECVLDKMTEMGFKP, NYVTQECLIMMYAYCDCVSRARQIFDELVSS, HLSSVNAMLDAYCMNGLPMEADQLLDSVIKKGAVP, and SASTYKLLYKAYTKANDKKLIQKLLKRMNSQGIVP. Residues 455–495 form a disordered region; sequence DKKPRTVPSKNSASKPDVESANNSGTDTSSKPNLSVWQVAA. Positions 462–495 are enriched in polar residues; that stretch reads PSKNSASKPDVESANNSGTDTSSKPNLSVWQVAA.

The protein belongs to the PPR family. P subfamily.

The protein resides in the plastid. Its subcellular location is the chloroplast. In terms of biological role, involved in the biogenesis of the plastid translation machinery by promoting the splicing of group II introns in chloroplasts. The protein is Pentatricopeptide repeat-containing protein PPR5 homolog, chloroplastic of Oryza sativa subsp. japonica (Rice).